The following is a 722-amino-acid chain: Phenylalanine ammonia-lyase lenB (722 aa).

Residue Y83 is the Proton donor/acceptor of the active site. The tract at residues 117 to 136 (LPTDRSSSRPSSRYPHGLRS) is disordered. The segment at residues 190 to 192 (ASG) is a cross-link (5-imidazolinone (Ala-Gly)). Residue S191 is modified to 2,3-didehydroalanine (Ser). Positions 247, 334, 340, 370, 441, 469, and 472 each coordinate (E)-cinnamate.

It belongs to the PAL/histidase family. In terms of processing, contains an active site 4-methylidene-imidazol-5-one (MIO), which is formed autocatalytically by cyclization and dehydration of residues Ala-Ser-Gly.

The enzyme catalyses L-phenylalanine = (E)-cinnamate + NH4(+). The protein operates within alkaloid biosynthesis. Its function is as follows. Phenylalanine ammonia-lyase; part of the gene cluster that mediates the biosynthesis of the ergot alkaloids lentopeptins A and B. Within the pathway, lenB provides the cinnamic acid starter unit for the synthesis of the N-acyldiketopiperazine intermediate by the NRPS lenA. Cinnamic acid is condensed with the Ala-Val-Ala peptide chain by lenA which leads to the N-acyldiketopiperazine intermediate which in turn is converted into lentopeptins A and B by the cytochrome P450 monooxygenase lenC. The protein is Phenylalanine ammonia-lyase lenB of Aspergillus lentulus.